The following is a 123-amino-acid chain: Large-conductance mechanosensitive channel (123 aa).

A run of 2 helical transmembrane segments spans residues 14–34 and 67–87; these read VLDLAVGVIIGSAFTGLVTSL and GNFINDVLNFLIIAFVVFLLV.

Belongs to the MscL family. In terms of assembly, homopentamer.

It localises to the cell membrane. Channel that opens in response to stretch forces in the membrane lipid bilayer. May participate in the regulation of osmotic pressure changes within the cell. This Lacticaseibacillus casei (strain BL23) (Lactobacillus casei) protein is Large-conductance mechanosensitive channel.